Reading from the N-terminus, the 504-residue chain is MESTEATMVERKAESPSSGDRARSIELAHQPTGAGASLSSFEVGGAKQGVNKAQDSAVNKGAANTPPRVAFGLSRYVVLVAYCLYCLLSGPSFMNWTTIADSLYKSGAFEWECKPGEIDTSVLPHEPKCPEQEVSVNHLFTVASCSYFVFAMLGGIMLDFAGPKFGALTGLACLITGWTLFGFSSESFRAYVPAMVFMGAGIDMAFFPCLCGANLFPGMVATIIAVYGSFRSISFIVGLSLRTIYINVEGATFRGVMLGYVGAGLGFCLLVALFIIPRRAWPAPDEAPSASAEQDVEAGADALAQKGEKNLTAIQSMKRDFLSLSFLPLFPYFVLVLITILFFAPSAKRLIPSAYEANQIISIFSFVPCIILGGIADRLGIVPVMMICNTCGLLSWILMLIPGIPCFAASQYIVSILISIQMSFLVSQVYCYVTEIFYPENLGKMIGFLCSVGGIISLVTDPMRKYSVDNGFYTMTVLCLIFALINEGLLLFMYVRKRKVPKVL.

The disordered stretch occupies residues 1–24 (MESTEATMVERKAESPSSGDRARS). The span at 8–24 (MVERKAESPSSGDRARS) shows a compositional bias: basic and acidic residues. 6 consecutive transmembrane segments (helical) span residues 76 to 96 (YVVLVAYCLYCLLSGPSFMNW), 138 to 158 (HLFTVASCSYFVFAMLGGIML), 165 to 185 (FGALTGLACLITGWTLFGFSS), 206 to 226 (FFPCLCGANLFPGMVATIIAV), 233 to 253 (ISFIVGLSLRTIYINVEGATF), and 256 to 276 (VMLGYVGAGLGFCLLVALFII). N310 carries an N-linked (GlcNAc...) asparagine glycan. 6 consecutive transmembrane segments (helical) span residues 324 to 344 (LSFLPLFPYFVLVLITILFFA), 356 to 376 (EANQIISIFSFVPCIILGGIA), 381 to 401 (IVPVMMICNTCGLLSWILMLI), 406 to 426 (CFAASQYIVSILISIQMSFLV), 436 to 456 (IFYPENLGKMIGFLCSVGGII), and 475 to 495 (MTVLCLIFALINEGLLLFMYV).

This sequence belongs to the SLC43A transporter (TC 2.A.1.44) family.

It localises to the cell membrane. It carries out the reaction L-tyrosine(in) = L-tyrosine(out). L-tyrosine uptake is stimulated in trans by aromatic and large neutral amino acids, but not smaller or charged amino acids. L-tyrosine transporter that is essential for parasite survival and virulence. May also act as an aromatic and large neutral amino acid transporter. Does not cotransport other charged ions. Involved in amino acid homeostasis by facilitating the net uptake of L-tyrosine and maintaining intracellular pools of aromatic and large neutral amino acids through exchange. The protein is Aromatic and large neutral amino acid transporter 5-3 of Toxoplasma gondii.